Here is a 751-residue protein sequence, read N- to C-terminus: Ribosome biogenesis protein ERB1 (751 aa).

2 disordered regions span residues 1-140 and 289-336; these read MALT…GNVP and SEPS…DPED. 2 stretches are compositionally biased toward acidic residues: residues 34–92 and 119–129; these read LTDE…SDSD and IEPDYDSDSST. The span at 294-305 shows a compositional bias: pro residues; it reads SQPPPLPAPKRP. A compositionally biased stretch (basic and acidic residues) spans 323–336; the sequence is EEEKQEWLKQDPED. WD repeat units lie at residues 410-449, 536-580, 582-621, 622-661, 665-704, and 720-751; these read HPKG…EIRR, PSSG…APFK, IKGA…KTLQ, PGIR…KPYK, YHSR…DLMT, and TDGL…VWCS.

It belongs to the WD repeat BOP1/ERB1 family. As to quaternary structure, component of the NOP7 complex, composed of ERB1, NOP7 and YTM1. The complex is held together by ERB1, which interacts with NOP7 via its N-terminal domain and with YTM1 via a high-affinity interaction between the seven-bladed beta-propeller domains of the 2 proteins. The NOP7 complex associates with the 66S pre-ribosome.

It is found in the nucleus. Its subcellular location is the nucleolus. It localises to the nucleoplasm. Component of the NOP7 complex, which is required for maturation of the 25S and 5.8S ribosomal RNAs and formation of the 60S ribosome. The sequence is that of Ribosome biogenesis protein ERB1 from Coprinopsis cinerea (strain Okayama-7 / 130 / ATCC MYA-4618 / FGSC 9003) (Inky cap fungus).